We begin with the raw amino-acid sequence, 136 residues long: Large ribosomal subunit protein uL16 (136 aa).

Belongs to the universal ribosomal protein uL16 family. In terms of assembly, part of the 50S ribosomal subunit.

Functionally, binds 23S rRNA and is also seen to make contacts with the A and possibly P site tRNAs. In Rickettsia typhi (strain ATCC VR-144 / Wilmington), this protein is Large ribosomal subunit protein uL16.